Here is a 347-residue protein sequence, read N- to C-terminus: Photosystem II assembly protein Ycf48 (347 aa).

The first 38 residues, 1 to 38 (MFAKQIDIHWQKMKGIKFLHWLLGTVLLWVSLSTPALA), serve as a signal peptide directing secretion. The Arg-rich patch motif lies at 202–226 (RGSFYSTWEPGQTAWEPHNRTTSRR).

The protein belongs to the Ycf48 family. In terms of assembly, interacts with the D1 protein (crystallized with PsbA1 or PsbA3), via the latter's C-terminal prepropeptide, may interact with parts of the mature D1 protein as well.

It localises to the cellular thylakoid lumen. A factor required for optimal assembly of photosystem II (PSII), acting in the early stages of PSII assembly. Also plays a role in replacement of photodamaged D1 (psbA). Assists YidC in synthesis of chlorophyll-binding proteins. In Thermosynechococcus vestitus (strain NIES-2133 / IAM M-273 / BP-1), this protein is Photosystem II assembly protein Ycf48.